Here is a 49-residue protein sequence, read N- to C-terminus: Large ribosomal subunit protein bL33 (49 aa).

It belongs to the bacterial ribosomal protein bL33 family.

This Desulfitobacterium hafniense (strain Y51) protein is Large ribosomal subunit protein bL33.